We begin with the raw amino-acid sequence, 729 residues long: MVHHDGADAHAGHAAPAQPPMKSDTATPKLNSEVELGSLPSEAHNDIMQMARVGDITGMEKLFAAGEYDATYSDDEGITPLHWAAINNQYAMCKFLIDKGAEINKKGGESVATPLQWAAQRCHYYTVHLLLQHGADPLITDSQGYNTLHISTFNGNVLLIVLLLHQGIPVDVEDAYGHTALMWSAYKGFPACVDVFLRWGASVHAKDEQGFTALHWALVKGSPGCIQKLIEYGADRFAKTANGKTPAITAQELNTVAAWQKALDECGYDEHGNAIVPSWPGASYLLQDRRSFMTKFTFLWPFVMVWATMVVMAGMPVFVGIPLGVLAGYAVQWVAQQVIAYAPPDMRQLQKTPWMAGIFAGSLFLCIMNWLLHIFGSTMFGQDSAVIPNLLFAFFISMTIWFYIRCMVDDPGFVPKMGGVAEQKAVIDELISLWKFDESNFCVTCMIRTPLRSKHCRRCQRCVAKHDHHCPWVYNCIGVNNHRHFFFYLINLTLSVVTYDWLTYRYLSTLSETASDECNILAPSLCRIVNADTYSLLTAIWASLQLTWVSMLLFVQFVQVSSAMTTYENMHGIDNYSATSLNSSFTSTGAPLNPPSLPAPGPSPAAGGARHGGRHAHGHNHKQGFIKQWSRLLGVDAFIETAAGRGATTGKGSKRNKRGNPYSRGCVTNCKDFWCDPSPMFGKHENGAAVLGGVPVNYTDMYESPGVMTSGGGGRRRGGGYESVAGEEV.

A compositionally biased stretch (basic and acidic residues) spans methionine 1–alanine 11. The segment at methionine 1–proline 28 is disordered. Over methionine 1 to threonine 297 the chain is Cytoplasmic. 5 ANK repeats span residues glutamate 76–lysine 105, serine 110–isoleucine 139, glutamine 143–valine 172, tyrosine 176–alanine 205, and glutamine 209–alanine 238. 2 helical membrane-spanning segments follow: residues phenylalanine 298–phenylalanine 318 and valine 319–isoleucine 339. Over alanine 340–tryptophan 354 the chain is Cytoplasmic. The chain crosses the membrane as a helical span at residues methionine 355–phenylalanine 375. The Lumenal portion of the chain corresponds to glycine 376 to aspartate 383. A helical transmembrane segment spans residues serine 384 to isoleucine 404. Residues arginine 405 to arginine 483 are Cytoplasmic-facing. The region spanning asparagine 440–isoleucine 490 is the DHHC domain. Cysteine 470 acts as the S-palmitoyl cysteine intermediate in catalysis. The helical transmembrane segment at histidine 484–tyrosine 504 threads the bilayer. Residues arginine 505 to tyrosine 534 are Lumenal-facing. Residues serine 535 to valine 555 traverse the membrane as a helical segment. Residues glutamine 556–valine 729 are Cytoplasmic-facing. 2 disordered regions span residues serine 587–asparagine 620 and threonine 709–valine 729. A compositionally biased stretch (pro residues) spans leucine 592–serine 603. A compositionally biased stretch (basic residues) spans histidine 611–asparagine 620.

The protein belongs to the DHHC palmitoyltransferase family. AKR/ZDHHC17 subfamily.

The protein localises to the early endosome membrane. Its subcellular location is the golgi apparatus membrane. It carries out the reaction L-cysteinyl-[protein] + hexadecanoyl-CoA = S-hexadecanoyl-L-cysteinyl-[protein] + CoA. In terms of biological role, palmitoyltransferase specific for casein kinase 1. This is Palmitoyltransferase akr1 (ptr-1) from Neurospora crassa (strain ATCC 24698 / 74-OR23-1A / CBS 708.71 / DSM 1257 / FGSC 987).